We begin with the raw amino-acid sequence, 155 residues long: Histone H2B.4 (155 aa).

The span at 1 to 28 (MAPKTKEEKPASEAVEPKAEAKPKAEKA) shows a compositional bias: basic and acidic residues. The disordered stretch occupies residues 1–62 (MAPKTKEEKP…GDKKKKKAKV (62 aa)). Residues 29-40 (PKKKEKKAPAKK) show a composition bias toward basic residues. K151 participates in a covalent cross-link: Glycyl lysine isopeptide (Lys-Gly) (interchain with G-Cter in ubiquitin).

It belongs to the histone H2B family. In terms of assembly, the nucleosome is a histone octamer containing two molecules each of H2A, H2B, H3 and H4 assembled in one H3-H4 heterotetramer and two H2A-H2B heterodimers. The octamer wraps approximately 147 bp of DNA. Post-translationally, monoubiquitinated to form H2BK143ub1; may give a specific tag for epigenetic transcriptional activation.

The protein resides in the nucleus. It is found in the chromosome. In terms of biological role, core component of nucleosome. Nucleosomes wrap and compact DNA into chromatin, limiting DNA accessibility to the cellular machineries which require DNA as a template. Histones thereby play a central role in transcription regulation, DNA repair, DNA replication and chromosomal stability. DNA accessibility is regulated via a complex set of post-translational modifications of histones, also called histone code, and nucleosome remodeling. The sequence is that of Histone H2B.4 from Volvox carteri (Green alga).